We begin with the raw amino-acid sequence, 372 residues long: GDP-mannose 4,6 dehydratase (372 aa).

The tract at residues 1–22 is disordered; that stretch reads MAHAPASCPSSRNSGDGDKGKP. Alanine 2 is modified (N-acetylalanine). Residues 30 to 35, 55 to 58, 86 to 87, 108 to 112, and tyrosine 123 each bind NADP(+); these read GITGQD, RRSS, DL, and LGAQS. The active site involves threonine 155. Active-site nucleophile residues include glutamate 157 and tyrosine 179. NADP(+) contacts are provided by lysine 183, histidine 209, and arginine 214. Tyrosine 323 carries the post-translational modification Phosphotyrosine.

This sequence belongs to the NAD(P)-dependent epimerase/dehydratase family. GDP-mannose 4,6-dehydratase subfamily. It depends on NADP(+) as a cofactor.

It carries out the reaction GDP-alpha-D-mannose = GDP-4-dehydro-alpha-D-rhamnose + H2O. Its pathway is nucleotide-sugar biosynthesis; GDP-L-fucose biosynthesis via de novo pathway; GDP-L-fucose from GDP-alpha-D-mannose: step 1/2. Inhibited by GDP-fucose. Catalyzes the conversion of GDP-D-mannose to GDP-4-dehydro-6-deoxy-D-mannose. This Cricetulus griseus (Chinese hamster) protein is GDP-mannose 4,6 dehydratase (GMDS).